Here is a 197-residue protein sequence, read N- to C-terminus: Probable UbiX-like flavin prenyltransferase (197 aa).

FMN-binding positions include 9 to 11 (GAT), Ser-36, 87 to 90 (SMKT), and Arg-122.

This sequence belongs to the UbiX/PAD1 family. YclB subfamily. As to quaternary structure, homododecamer.

The enzyme catalyses dimethylallyl phosphate + FMNH2 = prenylated FMNH2 + phosphate. Its function is as follows. Flavin prenyltransferase that catalyzes the synthesis of the prenylated FMN cofactor (prenyl-FMN) for phenolic acid decarboxylase C. Involved in the decarboxylation and detoxification of phenolic derivatives under both aerobic and anaerobic conditions. This is Probable UbiX-like flavin prenyltransferase (ecdB) from Escherichia coli.